An 842-amino-acid chain; its full sequence is Elongation factor 2 (842 aa).

One can recognise a tr-type G domain in the interval 17–346 (TNVRNMSVIA…MIVMHLPSPV (330 aa)). GTP-binding positions include 26 to 33 (AHVDHGKS), 158 to 161 (NKVD), and 213 to 215 (SGL). Histidine 699 is modified (diphthamide).

It belongs to the TRAFAC class translation factor GTPase superfamily. Classic translation factor GTPase family. EF-G/EF-2 subfamily.

The protein resides in the cytoplasm. The catalysed reaction is GTP + H2O = GDP + phosphate + H(+). Catalyzes the GTP-dependent ribosomal translocation step during translation elongation. During this step, the ribosome changes from the pre-translocational (PRE) to the post-translocational (POST) state as the newly formed A-site-bound peptidyl-tRNA and P-site-bound deacylated tRNA move to the P and E sites, respectively. Catalyzes the coordinated movement of the two tRNA molecules, the mRNA and conformational changes in the ribosome. The chain is Elongation factor 2 (EFT1) from Candida glabrata (strain ATCC 2001 / BCRC 20586 / JCM 3761 / NBRC 0622 / NRRL Y-65 / CBS 138) (Yeast).